The primary structure comprises 149 residues: Large ribosomal subunit protein bL9 (149 aa).

This sequence belongs to the bacterial ribosomal protein bL9 family.

Its function is as follows. Binds to the 23S rRNA. The sequence is that of Large ribosomal subunit protein bL9 from Pasteurella multocida (strain Pm70).